The following is a 189-amino-acid chain: Probable nicotinate-nucleotide adenylyltransferase (189 aa).

The protein belongs to the NadD family.

It catalyses the reaction nicotinate beta-D-ribonucleotide + ATP + H(+) = deamido-NAD(+) + diphosphate. The protein operates within cofactor biosynthesis; NAD(+) biosynthesis; deamido-NAD(+) from nicotinate D-ribonucleotide: step 1/1. In terms of biological role, catalyzes the reversible adenylation of nicotinate mononucleotide (NaMN) to nicotinic acid adenine dinucleotide (NaAD). The chain is Probable nicotinate-nucleotide adenylyltransferase from Caulobacter sp. (strain K31).